A 149-amino-acid chain; its full sequence is Large ribosomal subunit protein bL9 (149 aa).

This sequence belongs to the bacterial ribosomal protein bL9 family.

Functionally, binds to the 23S rRNA. The polypeptide is Large ribosomal subunit protein bL9 (Christiangramia forsetii (strain DSM 17595 / CGMCC 1.15422 / KT0803) (Gramella forsetii)).